The primary structure comprises 162 residues: ATP synthase subunit b (162 aa).

Residues 10 to 29 traverse the membrane as a helical segment; it reads LIWTIINFAVLLWGMHRFLY.

This sequence belongs to the ATPase B chain family. As to quaternary structure, F-type ATPases have 2 components, F(1) - the catalytic core - and F(0) - the membrane proton channel. F(1) has five subunits: alpha(3), beta(3), gamma(1), delta(1), epsilon(1). F(0) has three main subunits: a(1), b(2) and c(10-14). The alpha and beta chains form an alternating ring which encloses part of the gamma chain. F(1) is attached to F(0) by a central stalk formed by the gamma and epsilon chains, while a peripheral stalk is formed by the delta and b chains.

The protein localises to the cell membrane. Its function is as follows. F(1)F(0) ATP synthase produces ATP from ADP in the presence of a proton or sodium gradient. F-type ATPases consist of two structural domains, F(1) containing the extramembraneous catalytic core and F(0) containing the membrane proton channel, linked together by a central stalk and a peripheral stalk. During catalysis, ATP synthesis in the catalytic domain of F(1) is coupled via a rotary mechanism of the central stalk subunits to proton translocation. Component of the F(0) channel, it forms part of the peripheral stalk, linking F(1) to F(0). This Symbiobacterium thermophilum (strain DSM 24528 / JCM 14929 / IAM 14863 / T) protein is ATP synthase subunit b.